The primary structure comprises 122 residues: Large ribosomal subunit protein uL14 (122 aa).

The protein belongs to the universal ribosomal protein uL14 family. In terms of assembly, part of the 50S ribosomal subunit. Forms a cluster with proteins L3 and L19. In the 70S ribosome, L14 and L19 interact and together make contacts with the 16S rRNA in bridges B5 and B8.

Binds to 23S rRNA. Forms part of two intersubunit bridges in the 70S ribosome. This Methylobacillus flagellatus (strain ATCC 51484 / DSM 6875 / VKM B-1610 / KT) protein is Large ribosomal subunit protein uL14.